A 236-amino-acid polypeptide reads, in one-letter code: 2-C-methyl-D-erythritol 4-phosphate cytidylyltransferase (236 aa).

The protein belongs to the IspD/TarI cytidylyltransferase family. IspD subfamily. Homodimer.

It catalyses the reaction 2-C-methyl-D-erythritol 4-phosphate + CTP + H(+) = 4-CDP-2-C-methyl-D-erythritol + diphosphate. Its pathway is isoprenoid biosynthesis; isopentenyl diphosphate biosynthesis via DXP pathway; isopentenyl diphosphate from 1-deoxy-D-xylulose 5-phosphate: step 2/6. Its function is as follows. Catalyzes the formation of 4-diphosphocytidyl-2-C-methyl-D-erythritol from CTP and 2-C-methyl-D-erythritol 4-phosphate (MEP). The protein is 2-C-methyl-D-erythritol 4-phosphate cytidylyltransferase of Salmonella paratyphi A (strain ATCC 9150 / SARB42).